Here is a 159-residue protein sequence, read N- to C-terminus: ATP-dependent Clp protease adapter protein CLPS1, chloroplastic (159 aa).

A chloroplast-targeting transit peptide spans 1 to 44 (METAICGRLALAPSSLFNSKSGDKHLVSKGPCVNRSILMTLSTS).

This sequence belongs to the ClpS family. In terms of assembly, interacts with CLPC1 (via N-terminus) and CLPC2, but not with CLPt1 or CLPT2. Binds to ClpF; this interaction stimulates their association with ClpC. In terms of tissue distribution, expressed exclusively in photosynthetic green tissues with high levels in young, developing leaf tissues.

The protein localises to the plastid. It is found in the chloroplast stroma. Functionally, small adapter protein that modulate the activity of CLPC. Involved in plastid biogenesis in particular when chloroplast protein synthesis capacity is a limiting factor. Probably involved in substrate selection for plastid Clp protease system. Recruitment to ClpC chaperones is facilitated by CLPF thus forming a binary adapter for selective substrate recognition and delivery to plastid Clp protease system (CLPC). The chain is ATP-dependent Clp protease adapter protein CLPS1, chloroplastic from Arabidopsis thaliana (Mouse-ear cress).